A 123-amino-acid chain; its full sequence is Small ribosomal subunit protein uS12 (123 aa).

D89 carries the 3-methylthioaspartic acid modification. The disordered stretch occupies residues 100–123; it reads GSLDTSGVSDRKQGRSKYGTKRPK. Positions 113–123 are enriched in basic residues; that stretch reads GRSKYGTKRPK.

Belongs to the universal ribosomal protein uS12 family. As to quaternary structure, part of the 30S ribosomal subunit. Contacts proteins S8 and S17. May interact with IF1 in the 30S initiation complex.

Functionally, with S4 and S5 plays an important role in translational accuracy. Its function is as follows. Interacts with and stabilizes bases of the 16S rRNA that are involved in tRNA selection in the A site and with the mRNA backbone. Located at the interface of the 30S and 50S subunits, it traverses the body of the 30S subunit contacting proteins on the other side and probably holding the rRNA structure together. The combined cluster of proteins S8, S12 and S17 appears to hold together the shoulder and platform of the 30S subunit. This chain is Small ribosomal subunit protein uS12, found in Saccharophagus degradans (strain 2-40 / ATCC 43961 / DSM 17024).